We begin with the raw amino-acid sequence, 115 residues long: Replication initiation control protein YabA (115 aa).

Zn(2+)-binding residues include histidine 85, cysteine 87, cysteine 101, and cysteine 104.

It belongs to the YabA family. Homotetramer. Interacts with both DnaA and DnaN, acting as a bridge between these two proteins. Requires Zn(2+) as cofactor.

Its subcellular location is the cytoplasm. The protein resides in the nucleoid. In terms of biological role, involved in control of chromosome replication initiation. Inhibits the cooperative binding of DnaA to the oriC region, thus negatively regulating initiation of chromosome replication. Inhibits the ability of DnaA-ATP to form a helix on DNA; does not disassemble preformed DnaA-DNA helices. Decreases the residence time of DnaA on the chromosome at its binding sites (oriC, replication forks and promoter-binding sites). Tethers DnaA to the replication machinery via the DNA polymerase beta sliding clamp subunit (dnaN). Associates with oriC and other DnaA targets on the chromosome in a DnaA-dependent manner. In Lactiplantibacillus plantarum (strain ATCC BAA-793 / NCIMB 8826 / WCFS1) (Lactobacillus plantarum), this protein is Replication initiation control protein YabA.